Here is a 307-residue protein sequence, read N- to C-terminus: 17-beta-hydroxysteroid dehydrogenase type 3 (307 aa).

A helical transmembrane segment spans residues 6 to 26; it reads IIFVLTGTCAILVFGGKIASL. 47-76 is a binding site for NADP(+); the sequence is GKWAVITGGSDGIGRAYAEELSKQGMSVII. A substrate-binding site is contributed by serine 187. The active-site Proton acceptor is the tyrosine 200.

This sequence belongs to the short-chain dehydrogenases/reductases (SDR) family. As to expression, expression shows strong sexual dimorphism. In female, highly expressed in ovaries, and at lower levels in skin muscle, eyes and liver. In males, strongly expressed in liver and at lower levels in testis, spleen, kidney, intestine and muscle.

It localises to the endoplasmic reticulum. The protein resides in the membrane. The enzyme catalyses a 17beta-hydroxy steroid + NADP(+) = a 17-oxo steroid + NADPH + H(+). The catalysed reaction is testosterone + NADP(+) = androst-4-ene-3,17-dione + NADPH + H(+). It catalyses the reaction 3beta-hydroxyandrost-5-en-17-one + NADPH + H(+) = androst-5-en-3beta,17beta-diol + NADP(+). It carries out the reaction 3beta-hydroxy-5alpha-androstan-17-one + NADPH + H(+) = 5alpha-androstane-3beta,17beta-diol + NADP(+). The enzyme catalyses androst-4-ene-3,11,17-trione + NADPH + H(+) = 17beta-hydroxyandrost-4-ene-3,11-dione + NADP(+). The catalysed reaction is 11beta-hydroxyandrost-4-ene-3,17-dione + NADPH + H(+) = 11beta,17beta-dihydroxyandrost-4-ene-3-one + NADP(+). It functions in the pathway hormone biosynthesis; testosterone biosynthesis. Its pathway is steroid metabolism. Catalyzes the conversion of 17-oxosteroids to 17beta-hydroxysteroids in the presence of NADPH. Favors the reduction of androstenedione to testosterone. Testosterone is the key androgen driving male development and function. Among further tested androgens epiandrosterone and dehydroepiandrosterone are accepted as substrates and reduced at C-17. Can also reduce 11-ketoandrostenedione as well as 11beta-hydroxyandrostenedione at C-17 to the respective testosterone forms. Cannot use androsterone and androstanedione as substrates. This Danio rerio (Zebrafish) protein is 17-beta-hydroxysteroid dehydrogenase type 3 (hsd17b3).